The primary structure comprises 267 residues: Shikimate dehydrogenase (NADP(+)) (267 aa).

Shikimate is bound by residues serine 14–serine 16 and threonine 61. Lysine 65 acts as the Proton acceptor in catalysis. 2 residues coordinate shikimate: asparagine 86 and aspartate 101. NADP(+)-binding positions include glycine 126–alanine 130, asparagine 150–lysine 155, and leucine 213. Tyrosine 215 is a binding site for shikimate. Residue glycine 236 participates in NADP(+) binding.

The protein belongs to the shikimate dehydrogenase family. In terms of assembly, homodimer.

The enzyme catalyses shikimate + NADP(+) = 3-dehydroshikimate + NADPH + H(+). It functions in the pathway metabolic intermediate biosynthesis; chorismate biosynthesis; chorismate from D-erythrose 4-phosphate and phosphoenolpyruvate: step 4/7. Functionally, involved in the biosynthesis of the chorismate, which leads to the biosynthesis of aromatic amino acids. Catalyzes the reversible NADPH linked reduction of 3-dehydroshikimate (DHSA) to yield shikimate (SA). The sequence is that of Shikimate dehydrogenase (NADP(+)) from Ruthia magnifica subsp. Calyptogena magnifica.